The primary structure comprises 403 residues: TBC1 domain family member 20 (403 aa).

Residues 1-29 form a disordered region; that stretch reads MALRSARGDGPTSGRWDGGAEKGDFNAKR. A compositionally biased stretch (basic and acidic residues) spans 18–27; that stretch reads GGAEKGDFNA. Residues 60 to 246 enclose the Rab-GAP TBC domain; the sequence is LLTDEIRRKV…RLYDFFLACH (187 aa). 2 consecutive transmembrane segments (helical) span residues 238–258 and 367–387; these read LYDF…AVIV and FVKL…LAVV.

The protein localises to the membrane. Functionally, GTPase-activating protein (GAP) specific for Rab1 and Rab2 small GTPase families for which it can accelerate the intrinsic GTP hydrolysis rate by more than five orders of magnitude. Also shows GAP activity for RAB18 GTPase. Promotes RAB18 dissociation from the endoplasmic reticulum (ER) membrane into the cytosol, probably through stimulating RAB18 GTP-hydrolysis. Involved in maintaining endoplasmic reticulum structure. This chain is TBC1 domain family member 20 (TBC1D20), found in Bos taurus (Bovine).